Reading from the N-terminus, the 78-residue chain is Protein SlyX homolog (78 aa).

It belongs to the SlyX family.

The protein is Protein SlyX homolog of Photobacterium profundum (strain SS9).